The primary structure comprises 860 residues: Leucine--tRNA ligase (860 aa).

The 'HIGH' region signature appears at 42-52; the sequence is PYPSGRLHMGH. A 'KMSKS' region motif is present at residues 619 to 623; it reads KMSKS. Residue Lys-622 coordinates ATP.

This sequence belongs to the class-I aminoacyl-tRNA synthetase family.

The protein localises to the cytoplasm. It carries out the reaction tRNA(Leu) + L-leucine + ATP = L-leucyl-tRNA(Leu) + AMP + diphosphate. The protein is Leucine--tRNA ligase of Histophilus somni (strain 129Pt) (Haemophilus somnus).